Reading from the N-terminus, the 244-residue chain is Ribonuclease 3 (244 aa).

One can recognise an RNase III domain in the interval 5–136 (LAELERAIGI…LVGAIYLDQG (132 aa)). Residue Glu49 coordinates Mg(2+). Residue Asp53 is part of the active site. Mg(2+)-binding residues include Asp122 and Glu125. Glu125 is an active-site residue. The DRBM domain maps to 161–229 (DPTTRLQELM…ARKALAAWDK (69 aa)).

This sequence belongs to the ribonuclease III family. Homodimer. Mg(2+) serves as cofactor.

The protein resides in the cytoplasm. The catalysed reaction is Endonucleolytic cleavage to 5'-phosphomonoester.. Its function is as follows. Digests double-stranded RNA. Involved in the processing of primary rRNA transcript to yield the immediate precursors to the large and small rRNAs (23S and 16S). Processes some mRNAs, and tRNAs when they are encoded in the rRNA operon. Processes pre-crRNA and tracrRNA of type II CRISPR loci if present in the organism. This chain is Ribonuclease 3, found in Chloroflexus aurantiacus (strain ATCC 29364 / DSM 637 / Y-400-fl).